We begin with the raw amino-acid sequence, 699 residues long: Elongation factor G (699 aa).

One can recognise a tr-type G domain in the interval 8 to 288 (EDYRNFGIMA…AVVDYLPSPM (281 aa)). GTP contacts are provided by residues 17–24 (AHIDAGKT), 86–90 (DTPGH), and 140–143 (NKMD).

It belongs to the TRAFAC class translation factor GTPase superfamily. Classic translation factor GTPase family. EF-G/EF-2 subfamily.

It is found in the cytoplasm. Functionally, catalyzes the GTP-dependent ribosomal translocation step during translation elongation. During this step, the ribosome changes from the pre-translocational (PRE) to the post-translocational (POST) state as the newly formed A-site-bound peptidyl-tRNA and P-site-bound deacylated tRNA move to the P and E sites, respectively. Catalyzes the coordinated movement of the two tRNA molecules, the mRNA and conformational changes in the ribosome. The chain is Elongation factor G from Rhizobium johnstonii (strain DSM 114642 / LMG 32736 / 3841) (Rhizobium leguminosarum bv. viciae).